A 149-amino-acid chain; its full sequence is 3-dehydroquinate dehydratase (149 aa).

Residue tyrosine 25 is the Proton acceptor of the active site. Residues asparagine 76, histidine 82, and aspartate 89 each coordinate substrate. The Proton donor role is filled by histidine 102. Substrate-binding positions include 103-104 (LS) and arginine 113.

The protein belongs to the type-II 3-dehydroquinase family. Homododecamer.

It carries out the reaction 3-dehydroquinate = 3-dehydroshikimate + H2O. It participates in metabolic intermediate biosynthesis; chorismate biosynthesis; chorismate from D-erythrose 4-phosphate and phosphoenolpyruvate: step 3/7. Functionally, catalyzes a trans-dehydration via an enolate intermediate. The chain is 3-dehydroquinate dehydratase from Acaryochloris marina (strain MBIC 11017).